A 317-amino-acid chain; its full sequence is EMP1 trafficking protein-7 (317 aa).

Residues 1–32 (MAKDSQKNLNVSNNNNVQCTMGRSSQNINKSD) form a disordered region. Over residues 8–17 (NLNVSNNNNV) the composition is skewed to low complexity. A compositionally biased stretch (polar residues) spans 18–30 (QCTMGRSSQNINK). Positions 86–90 (KSLAE) match the PEXEL motif motif. Residues 230 to 250 (VLNALLPFIFIAFVYCTITML) form a helical membrane-spanning segment. Positions 265-317 (KILKMHYDYKHKENNNNNNNNNNNNNNNNNNNNNNNNNNNNNNNNNNKKSKKN) are essential for its function. Residues 277 to 317 (ENNNNNNNNNNNNNNNNNNNNNNNNNNNNNNNNNNKKSKKN) form a disordered region. Positions 279–311 (NNNNNNNNNNNNNNNNNNNNNNNNNNNNNNNNN) are enriched in low complexity.

May interact with MESA. May interact with J-dot compartment protein PF3D7_0801000.

It localises to the host cytoplasm. It is found in the vesicle. Its subcellular location is the membrane. Its function is as follows. During the asexual blood stage, plays an essential role in the recruitment and/or formation of EMP1-containing vesicles at the Maurer's clefts and their subsequent transfer to the host erythrocyte cell membrane. This is EMP1 trafficking protein-7 from Plasmodium falciparum (isolate 3D7).